The following is a 154-amino-acid chain: Sec-independent protein translocase protein TatB (154 aa).

The helical transmembrane segment at 1 to 21 (MIDIGITKLAIIGGIALIVIG) threads the bilayer.

It belongs to the TatB family. In terms of assembly, the Tat system comprises two distinct complexes: a TatABC complex, containing multiple copies of TatA, TatB and TatC subunits, and a separate TatA complex, containing only TatA subunits. Substrates initially bind to the TatABC complex, which probably triggers association of the separate TatA complex to form the active translocon.

Its subcellular location is the cell inner membrane. Functionally, part of the twin-arginine translocation (Tat) system that transports large folded proteins containing a characteristic twin-arginine motif in their signal peptide across membranes. Together with TatC, TatB is part of a receptor directly interacting with Tat signal peptides. TatB may form an oligomeric binding site that transiently accommodates folded Tat precursor proteins before their translocation. The chain is Sec-independent protein translocase protein TatB from Albidiferax ferrireducens (strain ATCC BAA-621 / DSM 15236 / T118) (Rhodoferax ferrireducens).